The sequence spans 192 residues: uncharacterized protein (192 aa).

The stretch at 53-111 (CLKESVERARKVYLSLLKDYERKSREYEKAYENYLKELRTYRETLYRIKEDLKFYERIC) forms a coiled coil.

This is an uncharacterized protein from Aquifex aeolicus (strain VF5).